We begin with the raw amino-acid sequence, 221 residues long: Thiamine-phosphate synthase (221 aa).

4-amino-2-methyl-5-(diphosphooxymethyl)pyrimidine contacts are provided by residues 49 to 53 and Asn-85; that span reads QFREK. Residues Asp-86 and Asp-105 each coordinate Mg(2+). Residue Ser-124 coordinates 4-amino-2-methyl-5-(diphosphooxymethyl)pyrimidine. 151–153 is a 2-[(2R,5Z)-2-carboxy-4-methylthiazol-5(2H)-ylidene]ethyl phosphate binding site; the sequence is TQS. Lys-154 contributes to the 4-amino-2-methyl-5-(diphosphooxymethyl)pyrimidine binding site. 2-[(2R,5Z)-2-carboxy-4-methylthiazol-5(2H)-ylidene]ethyl phosphate-binding positions include Gly-183 and 203-204; that span reads IS.

Belongs to the thiamine-phosphate synthase family. Requires Mg(2+) as cofactor.

It carries out the reaction 2-[(2R,5Z)-2-carboxy-4-methylthiazol-5(2H)-ylidene]ethyl phosphate + 4-amino-2-methyl-5-(diphosphooxymethyl)pyrimidine + 2 H(+) = thiamine phosphate + CO2 + diphosphate. The enzyme catalyses 2-(2-carboxy-4-methylthiazol-5-yl)ethyl phosphate + 4-amino-2-methyl-5-(diphosphooxymethyl)pyrimidine + 2 H(+) = thiamine phosphate + CO2 + diphosphate. The catalysed reaction is 4-methyl-5-(2-phosphooxyethyl)-thiazole + 4-amino-2-methyl-5-(diphosphooxymethyl)pyrimidine + H(+) = thiamine phosphate + diphosphate. The protein operates within cofactor biosynthesis; thiamine diphosphate biosynthesis; thiamine phosphate from 4-amino-2-methyl-5-diphosphomethylpyrimidine and 4-methyl-5-(2-phosphoethyl)-thiazole: step 1/1. Its function is as follows. Condenses 4-methyl-5-(beta-hydroxyethyl)thiazole monophosphate (THZ-P) and 2-methyl-4-amino-5-hydroxymethyl pyrimidine pyrophosphate (HMP-PP) to form thiamine monophosphate (TMP). This is Thiamine-phosphate synthase from Histophilus somni (strain 129Pt) (Haemophilus somnus).